A 126-amino-acid polypeptide reads, in one-letter code: 5-carboxymethyl-2-hydroxymuconate Delta-isomerase (126 aa).

Residue Pro-2 is the Proton acceptor; via imino nitrogen of the active site.

In terms of assembly, homotrimer.

The catalysed reaction is (2E,4Z)-5-hydroxypenta-2,4-diene-1,2,5-tricarboxylate = (3E,5R)-5-carboxy-2-oxohept-3-enedioate. Its pathway is aromatic compound metabolism; 4-hydroxyphenylacetate degradation; pyruvate and succinate semialdehyde from 4-hydroxyphenylacetate: step 4/7. Functionally, transforms 5-carboxymethyl-2-hydroxy-muconic acid (CHM) into 5-oxo-pent-3-ene-1,2,5-tricarboxylic acid (OPET). This Escherichia coli protein is 5-carboxymethyl-2-hydroxymuconate Delta-isomerase (hpcD).